The following is a 1029-amino-acid chain: E3 ubiquitin-protein ligase UPL6 (1029 aa).

Residues 1–20 (MFFSGDPSTRKRVDLGGRST) are disordered. The segment covering 8-20 (STRKRVDLGGRST) has biased composition (basic and acidic residues). The region spanning 45–74 (QNSAALKIQKFFRGRRSMAIERSKVRHDFC) is the IQ domain. Residues 688-1029 (SEDDLRSSIR…ISAEAGFDLS (342 aa)) enclose the HECT domain. Cys-997 acts as the Glycyl thioester intermediate in catalysis.

The protein belongs to the UPL family.

It catalyses the reaction S-ubiquitinyl-[E2 ubiquitin-conjugating enzyme]-L-cysteine + [acceptor protein]-L-lysine = [E2 ubiquitin-conjugating enzyme]-L-cysteine + N(6)-ubiquitinyl-[acceptor protein]-L-lysine.. The protein operates within protein modification; protein ubiquitination. Its function is as follows. Probable E3 ubiquitin-protein ligase which mediates ubiquitination and subsequent proteasomal degradation of target proteins. The chain is E3 ubiquitin-protein ligase UPL6 (UPL6) from Arabidopsis thaliana (Mouse-ear cress).